A 283-amino-acid chain; its full sequence is Bifunctional protein FolD (283 aa).

NADP(+) contacts are provided by residues 164–166 (GRS), S189, and T230.

The protein belongs to the tetrahydrofolate dehydrogenase/cyclohydrolase family. In terms of assembly, homodimer.

It carries out the reaction (6R)-5,10-methylene-5,6,7,8-tetrahydrofolate + NADP(+) = (6R)-5,10-methenyltetrahydrofolate + NADPH. The enzyme catalyses (6R)-5,10-methenyltetrahydrofolate + H2O = (6R)-10-formyltetrahydrofolate + H(+). It functions in the pathway one-carbon metabolism; tetrahydrofolate interconversion. In terms of biological role, catalyzes the oxidation of 5,10-methylenetetrahydrofolate to 5,10-methenyltetrahydrofolate and then the hydrolysis of 5,10-methenyltetrahydrofolate to 10-formyltetrahydrofolate. The chain is Bifunctional protein FolD from Dictyoglomus thermophilum (strain ATCC 35947 / DSM 3960 / H-6-12).